The following is a 389-amino-acid chain: Arginine biosynthesis bifunctional protein ArgJ (389 aa).

Residues T150, K173, T184, E263, N384, and T389 each contribute to the substrate site. Residue T184 is the Nucleophile of the active site.

This sequence belongs to the ArgJ family. As to quaternary structure, heterotetramer of two alpha and two beta chains.

It is found in the cytoplasm. The catalysed reaction is N(2)-acetyl-L-ornithine + L-glutamate = N-acetyl-L-glutamate + L-ornithine. It catalyses the reaction L-glutamate + acetyl-CoA = N-acetyl-L-glutamate + CoA + H(+). It participates in amino-acid biosynthesis; L-arginine biosynthesis; L-ornithine and N-acetyl-L-glutamate from L-glutamate and N(2)-acetyl-L-ornithine (cyclic): step 1/1. It functions in the pathway amino-acid biosynthesis; L-arginine biosynthesis; N(2)-acetyl-L-ornithine from L-glutamate: step 1/4. Functionally, catalyzes two activities which are involved in the cyclic version of arginine biosynthesis: the synthesis of N-acetylglutamate from glutamate and acetyl-CoA as the acetyl donor, and of ornithine by transacetylation between N(2)-acetylornithine and glutamate. This chain is Arginine biosynthesis bifunctional protein ArgJ, found in Deinococcus radiodurans (strain ATCC 13939 / DSM 20539 / JCM 16871 / CCUG 27074 / LMG 4051 / NBRC 15346 / NCIMB 9279 / VKM B-1422 / R1).